The following is a 332-amino-acid chain: Elongin-A (332 aa).

The region spanning leucine 24 to leucine 68 is the F-box domain. Residues threonine 228–arginine 332 are disordered. Positions leucine 296–glutamine 309 are enriched in polar residues. The segment covering proline 320 to arginine 332 has biased composition (basic residues).

Belongs to the ELA1 family. Heterodimer with ELC1. Component of a CRL3 E3 ubiquitin ligase complex consisting of a cullin, the linker protein ELC1, the substrate receptor ELA1, and a RING protein. Interacts with the large RNA polymerase II subunit RPO21 in a manner dependent on DEF1.

Its function is as follows. As part of the CRL3 E3 ubiquitin ligase complex; polyubiquitylates monoubiquitylated RNA polymerase II subunit RPO21 to trigger its proteolysis; plays a role in global genomic repair. In Eremothecium gossypii (strain ATCC 10895 / CBS 109.51 / FGSC 9923 / NRRL Y-1056) (Yeast), this protein is Elongin-A (ELA1).